A 106-amino-acid chain; its full sequence is Probable insulin-like peptide beta-type 2 (106 aa).

The N-terminal stretch at 1 to 15 is a signal peptide; the sequence is MNAIIFCLLFTTVTA. Residues 16–56 constitute a propeptide that is removed on maturation; it reads TYEVFGKGIEHRNEHLIINQLDIIPVESTPTPNRASRVQKR. 4 cysteine pairs are disulfide-bonded: Cys58–Cys86, Cys70–Cys99, Cys73–Cys100, and Cys85–Cys90.

This sequence belongs to the insulin family.

It localises to the secreted. The protein is Probable insulin-like peptide beta-type 2 (ins-2) of Caenorhabditis elegans.